A 229-amino-acid chain; its full sequence is Potassium/proton antiporter CemA (229 aa).

4 helical membrane-spanning segments follow: residues 11 to 31, 118 to 138, 158 to 178, and 190 to 210; these read TTPF…SLFF, IISF…LVIL, LLAL…ELLI, and LLVC…TFNY.

This sequence belongs to the CemA family.

Its subcellular location is the plastid. It localises to the chloroplast inner membrane. It catalyses the reaction K(+)(in) + H(+)(out) = K(+)(out) + H(+)(in). Contributes to K(+)/H(+) antiport activity by supporting proton efflux to control proton extrusion and homeostasis in chloroplasts in a light-dependent manner to modulate photosynthesis. Prevents excessive induction of non-photochemical quenching (NPQ) under continuous-light conditions. Indirectly promotes efficient inorganic carbon uptake into chloroplasts. This is Potassium/proton antiporter CemA from Pelargonium hortorum (Common geranium).